Here is a 253-residue protein sequence, read N- to C-terminus: Hydroxyacylglutathione hydrolase (253 aa).

The Zn(2+) site is built by histidine 54, histidine 56, aspartate 58, histidine 59, histidine 110, aspartate 127, and histidine 165.

This sequence belongs to the metallo-beta-lactamase superfamily. Glyoxalase II family. As to quaternary structure, monomer. It depends on Zn(2+) as a cofactor.

The catalysed reaction is an S-(2-hydroxyacyl)glutathione + H2O = a 2-hydroxy carboxylate + glutathione + H(+). Its pathway is secondary metabolite metabolism; methylglyoxal degradation; (R)-lactate from methylglyoxal: step 2/2. Thiolesterase that catalyzes the hydrolysis of S-D-lactoyl-glutathione to form glutathione and D-lactic acid. The sequence is that of Hydroxyacylglutathione hydrolase from Idiomarina loihiensis (strain ATCC BAA-735 / DSM 15497 / L2-TR).